Consider the following 67-residue polypeptide: Large ribosomal subunit protein bL35 (67 aa).

This sequence belongs to the bacterial ribosomal protein bL35 family.

The chain is Large ribosomal subunit protein bL35 from Methylorubrum extorquens (strain CM4 / NCIMB 13688) (Methylobacterium extorquens).